A 230-amino-acid polypeptide reads, in one-letter code: 7-cyano-7-deazaguanine synthase (230 aa).

8-18 (FSGGQDSTTCL) provides a ligand contact to ATP. 4 residues coordinate Zn(2+): Cys187, Cys196, Cys199, and Cys202.

The protein belongs to the QueC family. Zn(2+) serves as cofactor.

It carries out the reaction 7-carboxy-7-deazaguanine + NH4(+) + ATP = 7-cyano-7-deazaguanine + ADP + phosphate + H2O + H(+). Its pathway is purine metabolism; 7-cyano-7-deazaguanine biosynthesis. Functionally, catalyzes the ATP-dependent conversion of 7-carboxy-7-deazaguanine (CDG) to 7-cyano-7-deazaguanine (preQ(0)). This Shewanella amazonensis (strain ATCC BAA-1098 / SB2B) protein is 7-cyano-7-deazaguanine synthase.